Here is a 69-residue protein sequence, read N- to C-terminus: Large ribosomal subunit protein eL38z/eL38y (69 aa).

This sequence belongs to the eukaryotic ribosomal protein eL38 family.

This Arabidopsis thaliana (Mouse-ear cress) protein is Large ribosomal subunit protein eL38z/eL38y (RPL38A).